The primary structure comprises 315 residues: Small ribosomal subunit protein uS3 (315 aa).

A KH type-2 domain is found at 38–106; it reads IRKMMSRGME…QVQLNILEVK (69 aa). Residues 211 to 315 form a disordered region; the sequence is AEREAQEALQ…VANTPEKAEE (105 aa). Positions 222–232 are enriched in basic residues; the sequence is QTRRERPRRGP. The segment covering 265–315 has biased composition (low complexity); it reads APAETPAGEAAATEPTAPVAEPATAAASAPAEAASAPAEAAVANTPEKAEE.

This sequence belongs to the universal ribosomal protein uS3 family. In terms of assembly, part of the 30S ribosomal subunit. Forms a tight complex with proteins S10 and S14.

Functionally, binds the lower part of the 30S subunit head. Binds mRNA in the 70S ribosome, positioning it for translation. The sequence is that of Small ribosomal subunit protein uS3 from Frankia casuarinae (strain DSM 45818 / CECT 9043 / HFP020203 / CcI3).